The following is a 267-amino-acid chain: Orotidine 5'-phosphate decarboxylase (267 aa).

Substrate is bound by residues D38, K60 to H62, D92 to T101, Y218, and R236. K94 acts as the Proton donor in catalysis.

Belongs to the OMP decarboxylase family.

It catalyses the reaction orotidine 5'-phosphate + H(+) = UMP + CO2. Its pathway is pyrimidine metabolism; UMP biosynthesis via de novo pathway; UMP from orotate: step 2/2. This is Orotidine 5'-phosphate decarboxylase (URA3) from Debaryomyces hansenii (strain ATCC 36239 / CBS 767 / BCRC 21394 / JCM 1990 / NBRC 0083 / IGC 2968) (Yeast).